Reading from the N-terminus, the 145-residue chain is Deoxyuridine 5'-triphosphate nucleotidohydrolase (145 aa).

Substrate-binding positions include 65–67, asparagine 78, and 82–84; these read RSG and TID.

Belongs to the dUTPase family. Mg(2+) serves as cofactor.

The catalysed reaction is dUTP + H2O = dUMP + diphosphate + H(+). It participates in pyrimidine metabolism; dUMP biosynthesis; dUMP from dCTP (dUTP route): step 2/2. Its function is as follows. This enzyme is involved in nucleotide metabolism: it produces dUMP, the immediate precursor of thymidine nucleotides and it decreases the intracellular concentration of dUTP so that uracil cannot be incorporated into DNA. This Clostridium tetani (strain Massachusetts / E88) protein is Deoxyuridine 5'-triphosphate nucleotidohydrolase.